The following is a 158-amino-acid chain: Protein-export protein SecB (158 aa).

The protein belongs to the SecB family. In terms of assembly, homotetramer, a dimer of dimers. One homotetramer interacts with 1 SecA dimer.

Its subcellular location is the cytoplasm. Functionally, one of the proteins required for the normal export of preproteins out of the cell cytoplasm. It is a molecular chaperone that binds to a subset of precursor proteins, maintaining them in a translocation-competent state. It also specifically binds to its receptor SecA. This is Protein-export protein SecB from Pectobacterium atrosepticum (strain SCRI 1043 / ATCC BAA-672) (Erwinia carotovora subsp. atroseptica).